Reading from the N-terminus, the 155-residue chain is MSRRSTAAGETAKSDPIYRNRLVNMLVNRLLKDGKKSLAYRILYQAMKQIKQKTQKNPLSVLRQAVRRVTPNVAVKARRVGGSTYQVPVEIIPAQGKALAIRWLLGASRKRPGRSMALKSSYELMDAAKNNGSAVRKKEETHRMAEANKAFAHFR.

Belongs to the universal ribosomal protein uS7 family. In terms of assembly, part of the 30S ribosomal subunit.

It localises to the plastid. It is found in the chloroplast. Its function is as follows. One of the primary rRNA binding proteins, it binds directly to 16S rRNA where it nucleates assembly of the head domain of the 30S subunit. In Angiopteris evecta (Mule's foot fern), this protein is Small ribosomal subunit protein uS7cz/uS7cy (rps7-A).